Here is a 635-residue protein sequence, read N- to C-terminus: Threonine--tRNA ligase (635 aa).

Residues 1–61 (MINIKFPDGS…NHDCELRLIT (61 aa)) form the TGS domain. The interval 242 to 533 (DHRKIGKALD…LIEHYAGNMP (292 aa)) is catalytic. Residues cysteine 333, histidine 384, and histidine 510 each coordinate Zn(2+).

Belongs to the class-II aminoacyl-tRNA synthetase family. Homodimer. Requires Zn(2+) as cofactor.

The protein localises to the cytoplasm. The enzyme catalyses tRNA(Thr) + L-threonine + ATP = L-threonyl-tRNA(Thr) + AMP + diphosphate + H(+). Catalyzes the attachment of threonine to tRNA(Thr) in a two-step reaction: L-threonine is first activated by ATP to form Thr-AMP and then transferred to the acceptor end of tRNA(Thr). Also edits incorrectly charged L-seryl-tRNA(Thr). In Francisella philomiragia subsp. philomiragia (strain ATCC 25017 / CCUG 19701 / FSC 153 / O#319-036), this protein is Threonine--tRNA ligase.